A 210-amino-acid chain; its full sequence is Scoloptoxin SSD552 (210 aa).

The signal sequence occupies residues 1–23; the sequence is MNILLSSTLFVLLMFQIIGSGMG.

Contains 3 disulfide bonds. As to expression, expressed by the venom gland.

It is found in the secreted. The polypeptide is Scoloptoxin SSD552 (Scolopendra dehaani (Thai centipede)).